The chain runs to 205 residues: Small ribosomal subunit protein uS4 (205 aa).

One can recognise an S4 RNA-binding domain in the interval 110-172 (RRLQTIIYRK…VGSPITKEKL (63 aa)). Positions 173-205 (MAKPQPASAPKAAAAPKAAAAPAEAAAAPKKEE) are disordered. The segment covering 174–205 (AKPQPASAPKAAAAPKAAAAPAEAAAAPKKEE) has biased composition (low complexity).

The protein belongs to the universal ribosomal protein uS4 family. Part of the 30S ribosomal subunit. Contacts protein S5. The interaction surface between S4 and S5 is involved in control of translational fidelity.

One of the primary rRNA binding proteins, it binds directly to 16S rRNA where it nucleates assembly of the body of the 30S subunit. Functionally, with S5 and S12 plays an important role in translational accuracy. The sequence is that of Small ribosomal subunit protein uS4 from Methanocella arvoryzae (strain DSM 22066 / NBRC 105507 / MRE50).